A 1033-amino-acid chain; its full sequence is Translation initiation factor IF-2 (1033 aa).

The disordered stretch occupies residues 49 to 432; it reads AFQQGGGNGR…APSVGGVMLP (384 aa). The span at 59-113 shows a compositional bias: low complexity; sequence SAGRPAAPKKAAPRPSAPSPAQAGPSQAAPAAGDRAAAPRPSAAPKAPAAQQPAA. Composition is skewed to pro residues over residues 114–140 and 148–164; these read PSAPAPAPSQGPRPTPGPKPAPRPAPA and PAAPAAPSTPAPAPSGP. The segment covering 171-189 has biased composition (low complexity); sequence PGAPKPGGARPSGPGQDRG. Over residues 190-201 the composition is skewed to gly residues; that stretch reads QQGGQGRPGGQR. Pro residues predominate over residues 236–246; that stretch reads APRPQGGPRPG. The segment covering 247-268 has biased composition (gly residues); it reads GPGGAPGGGPRPQGPGGQGGGP. A compositionally biased stretch (low complexity) spans 305 to 314; the sequence is MMPQRPAAGP. Over residues 318-401 the composition is skewed to gly residues; the sequence is PGGGGRGPGG…GTQGAFGRPG (84 aa). Residues 405 to 414 show a composition bias toward basic residues; the sequence is RRGRKSKRQR. The 173-residue stretch at 526–698 folds into the tr-type G domain; the sequence is VRPPVVTVMG…VVLTADASLD (173 aa). The segment at 535–542 is G1; sequence GHVDHGKT. 535-542 contributes to the GTP binding site; that stretch reads GHVDHGKT. The segment at 560–564 is G2; that stretch reads GITQH. A G3 region spans residues 585 to 588; sequence DTPG. GTP contacts are provided by residues 585–589 and 639–642; these read DTPGH and NKID. Residues 639 to 642 are G4; sequence NKID. The G5 stretch occupies residues 675-677; the sequence is SAK.

This sequence belongs to the TRAFAC class translation factor GTPase superfamily. Classic translation factor GTPase family. IF-2 subfamily.

Its subcellular location is the cytoplasm. In terms of biological role, one of the essential components for the initiation of protein synthesis. Protects formylmethionyl-tRNA from spontaneous hydrolysis and promotes its binding to the 30S ribosomal subunits. Also involved in the hydrolysis of GTP during the formation of the 70S ribosomal complex. This Streptomyces coelicolor (strain ATCC BAA-471 / A3(2) / M145) protein is Translation initiation factor IF-2.